The chain runs to 300 residues: Tyrosine recombinase XerD (300 aa).

The Core-binding (CB) domain occupies 5–90; sequence YQCDPLIDAF…SLRRFYNYLL (86 aa). A Tyr recombinase domain is found at 111-294; the sequence is HLPDSLSESQ…ARARLQELHQ (184 aa). Active-site residues include R151, K175, H246, R249, and H272. Y281 acts as the O-(3'-phospho-DNA)-tyrosine intermediate in catalysis.

Belongs to the 'phage' integrase family. XerD subfamily. In terms of assembly, forms a cyclic heterotetrameric complex composed of two molecules of XerC and two molecules of XerD.

The protein localises to the cytoplasm. In terms of biological role, site-specific tyrosine recombinase, which acts by catalyzing the cutting and rejoining of the recombining DNA molecules. The XerC-XerD complex is essential to convert dimers of the bacterial chromosome into monomers to permit their segregation at cell division. It also contributes to the segregational stability of plasmids. This Shewanella oneidensis (strain ATCC 700550 / JCM 31522 / CIP 106686 / LMG 19005 / NCIMB 14063 / MR-1) protein is Tyrosine recombinase XerD.